Consider the following 127-residue polypeptide: HTH-type transcriptional regulator ImmR (127 aa).

The span at M1–Q12 shows a compositional bias: basic and acidic residues. The segment at M1–A22 is disordered. The HTH cro/C1-type domain occupies L7 to L61. Residues Q18–R37 constitute a DNA-binding region (H-T-H motif).

The protein is HTH-type transcriptional regulator ImmR (immR) of Bacillus subtilis (strain 168).